Here is a 137-residue protein sequence, read N- to C-terminus: Small ribosomal subunit protein bS6 (137 aa).

The interval 96 to 137 (ITEASPMAKAKDERDTRRSSEERAPRAEATEEAEESAENTAE) is disordered. Basic and acidic residues predominate over residues 104–124 (KAKDERDTRRSSEERAPRAEA). Residues 125–137 (TEEAEESAENTAE) are compositionally biased toward acidic residues.

The protein belongs to the bacterial ribosomal protein bS6 family.

Binds together with bS18 to 16S ribosomal RNA. The protein is Small ribosomal subunit protein bS6 of Shewanella pealeana (strain ATCC 700345 / ANG-SQ1).